A 546-amino-acid chain; its full sequence is Chaperonin GroEL (546 aa).

ATP contacts are provided by residues 30-33 (TLGP), Lys-51, 87-91 (DGTTT), Gly-415, 479-481 (NAA), and Asp-495. The disordered stretch occupies residues 527–546 (DESAAPAMPGGMGGMGDMGM). The span at 536–546 (GGMGGMGDMGM) shows a compositional bias: gly residues.

The protein belongs to the chaperonin (HSP60) family. As to quaternary structure, forms a cylinder of 14 subunits composed of two heptameric rings stacked back-to-back. Interacts with the co-chaperonin GroES.

The protein resides in the cytoplasm. It catalyses the reaction ATP + H2O + a folded polypeptide = ADP + phosphate + an unfolded polypeptide.. In terms of biological role, together with its co-chaperonin GroES, plays an essential role in assisting protein folding. The GroEL-GroES system forms a nano-cage that allows encapsulation of the non-native substrate proteins and provides a physical environment optimized to promote and accelerate protein folding. The protein is Chaperonin GroEL of Acidovorax sp. (strain JS42).